We begin with the raw amino-acid sequence, 37 residues long: Large ribosomal subunit protein bL36 (37 aa).

Belongs to the bacterial ribosomal protein bL36 family.

In Colwellia psychrerythraea (strain 34H / ATCC BAA-681) (Vibrio psychroerythus), this protein is Large ribosomal subunit protein bL36.